Reading from the N-terminus, the 766-residue chain is MSPLARTPRKTSVLDTVEHAATTPDQPQPYGELGLKDDEYRRIRQILGRRPTDTELAMYSVMWSEHCSYKSSKVHLRYFGETTSDEMRAAMLAGIGENAGVVDIGDGWAVTFKVESHNHPSYVEPYQGAATGVGGIVRDIMAMGARPVAVMDQLRFGAADAPDTRRVLDGVVRGIGGYGNSLGLPNIGGETVFDPCYAGNPLVNALCVGVLRQEDLHLAFASGAGNKIILFGARTGLDGIGGVSVLASDTFDAEGSRKKLPSVQVGDPFMEKVLIECCLELYAGGLVIGIQDLGGAGLSCATSELASAGDGGMTIQLDSVPLRAKEMTPAEVLCSESQERMCAVVSPKNVDAFLAVCRKWEVLATVIGEVTDGDRLQITWHGETVVDVPPRTVAHEGPVYQRPVARPDTQDALNADRSAKLSRPVTGDELRATLLALLGSPHLCSRAFITEQYDRYVRGNTVLAEHADGGMLRIDQSTGRGIAVSTDASGRYTLLDPYAGAQLALAEAYRNVAVTGATPVAVTNCLNFGSPEDPGVMWQFTQAVRGLADGCADLGIPVTGGNVSFYNQTGSAAILPTPVVGVLGVIDDVRRRIPTGLGAEPGETLMLLGDTRDEFDGSVWAQVTADHLGGLPPVVDLAREKLLAAVLSSASRDGLVSAAHDLSEGGLAQAIVESALAGETGCRIVLPEGADPFVLLFSESAGRVLVAVPRTEESRFRGMCEARGLPAVRIGVVDQGSDAVEVQGLFAVSLAELRATSEAVLPRYFG.

Histidine 66 is an active-site residue. Residues tyrosine 69 and lysine 113 each contribute to the ATP site. Glutamate 115 contacts Mg(2+). Residues 116–119 and arginine 138 each bind substrate; that span reads SHNH. The Proton acceptor role is filled by histidine 117. Aspartate 139 contacts Mg(2+). Residue glutamine 264 participates in substrate binding. Position 292 (aspartate 292) interacts with Mg(2+). 336–338 provides a ligand contact to substrate; it reads ESQ. Residues asparagine 524 and glycine 561 each contribute to the ATP site. Asparagine 562 contacts Mg(2+). Serine 564 serves as a coordination point for substrate.

Belongs to the FGAMS family. As to quaternary structure, monomer. Part of the FGAM synthase complex composed of 1 PurL, 1 PurQ and 2 PurS subunits.

The protein resides in the cytoplasm. It catalyses the reaction N(2)-formyl-N(1)-(5-phospho-beta-D-ribosyl)glycinamide + L-glutamine + ATP + H2O = 2-formamido-N(1)-(5-O-phospho-beta-D-ribosyl)acetamidine + L-glutamate + ADP + phosphate + H(+). The protein operates within purine metabolism; IMP biosynthesis via de novo pathway; 5-amino-1-(5-phospho-D-ribosyl)imidazole from N(2)-formyl-N(1)-(5-phospho-D-ribosyl)glycinamide: step 1/2. Its function is as follows. Part of the phosphoribosylformylglycinamidine synthase complex involved in the purines biosynthetic pathway. Catalyzes the ATP-dependent conversion of formylglycinamide ribonucleotide (FGAR) and glutamine to yield formylglycinamidine ribonucleotide (FGAM) and glutamate. The FGAM synthase complex is composed of three subunits. PurQ produces an ammonia molecule by converting glutamine to glutamate. PurL transfers the ammonia molecule to FGAR to form FGAM in an ATP-dependent manner. PurS interacts with PurQ and PurL and is thought to assist in the transfer of the ammonia molecule from PurQ to PurL. This chain is Phosphoribosylformylglycinamidine synthase subunit PurL, found in Mycobacterium tuberculosis (strain CDC 1551 / Oshkosh).